Consider the following 230-residue polypeptide: Cytochrome c oxidase subunit 2 (230 aa).

Residues methionine 1–serine 14 are Mitochondrial intermembrane-facing. The chain crosses the membrane as a helical span at residues proline 15–methionine 45. Topologically, residues valine 46–glutamine 59 are mitochondrial matrix. A helical transmembrane segment spans residues glutamate 60 to methionine 87. At aspartate 88–alanine 230 the chain is on the mitochondrial intermembrane side. The Cu cation site is built by histidine 161, cysteine 196, glutamate 198, cysteine 200, histidine 204, and methionine 207. Glutamate 198 serves as a coordination point for Mg(2+).

This sequence belongs to the cytochrome c oxidase subunit 2 family. Component of the cytochrome c oxidase (complex IV, CIV), a multisubunit enzyme composed of 14 subunits. The complex is composed of a catalytic core of 3 subunits MT-CO1, MT-CO2 and MT-CO3, encoded in the mitochondrial DNA, and 11 supernumerary subunits COX4I, COX5A, COX5B, COX6A, COX6B, COX6C, COX7A, COX7B, COX7C, COX8 and NDUFA4, which are encoded in the nuclear genome. The complex exists as a monomer or a dimer and forms supercomplexes (SCs) in the inner mitochondrial membrane with NADH-ubiquinone oxidoreductase (complex I, CI) and ubiquinol-cytochrome c oxidoreductase (cytochrome b-c1 complex, complex III, CIII), resulting in different assemblies (supercomplex SCI(1)III(2)IV(1) and megacomplex MCI(2)III(2)IV(2)). Found in a complex with TMEM177, COA6, COX18, COX20, SCO1 and SCO2. Interacts with TMEM177 in a COX20-dependent manner. Interacts with COX20. Interacts with COX16. The cofactor is Cu cation.

The protein localises to the mitochondrion inner membrane. The catalysed reaction is 4 Fe(II)-[cytochrome c] + O2 + 8 H(+)(in) = 4 Fe(III)-[cytochrome c] + 2 H2O + 4 H(+)(out). Its function is as follows. Component of the cytochrome c oxidase, the last enzyme in the mitochondrial electron transport chain which drives oxidative phosphorylation. The respiratory chain contains 3 multisubunit complexes succinate dehydrogenase (complex II, CII), ubiquinol-cytochrome c oxidoreductase (cytochrome b-c1 complex, complex III, CIII) and cytochrome c oxidase (complex IV, CIV), that cooperate to transfer electrons derived from NADH and succinate to molecular oxygen, creating an electrochemical gradient over the inner membrane that drives transmembrane transport and the ATP synthase. Cytochrome c oxidase is the component of the respiratory chain that catalyzes the reduction of oxygen to water. Electrons originating from reduced cytochrome c in the intermembrane space (IMS) are transferred via the dinuclear copper A center (CU(A)) of subunit 2 and heme A of subunit 1 to the active site in subunit 1, a binuclear center (BNC) formed by heme A3 and copper B (CU(B)). The BNC reduces molecular oxygen to 2 water molecules using 4 electrons from cytochrome c in the IMS and 4 protons from the mitochondrial matrix. The chain is Cytochrome c oxidase subunit 2 (mt-co2) from Oncorhynchus mykiss (Rainbow trout).